Reading from the N-terminus, the 347-residue chain is ATPase GET3 (347 aa).

Residue 26–33 (KGGVGKTT) participates in ATP binding. Asp-57 is a catalytic residue. Positions 241 and 268 each coordinate ATP. Zn(2+)-binding residues include Cys-279 and Cys-282.

The protein belongs to the arsA ATPase family. In terms of assembly, homodimer. Component of the Golgi to ER traffic (GET) complex, which is composed of GET1, GET2 and GET3. Within the complex, GET1 and GET2 form a heterotetramer which is stabilized by phosphatidylinositol binding and which binds to the GET3 homodimer. Interacts with the chloride channel protein GEF1.

The protein resides in the cytoplasm. It is found in the endoplasmic reticulum. The protein localises to the golgi apparatus. In terms of biological role, ATPase required for the post-translational delivery of tail-anchored (TA) proteins to the endoplasmic reticulum. Recognizes and selectively binds the transmembrane domain of TA proteins in the cytosol. This complex then targets to the endoplasmic reticulum by membrane-bound receptors GET1 and GET2, where the tail-anchored protein is released for insertion. This process is regulated by ATP binding and hydrolysis. ATP binding drives the homodimer towards the closed dimer state, facilitating recognition of newly synthesized TA membrane proteins. ATP hydrolysis is required for insertion. Subsequently, the homodimer reverts towards the open dimer state, lowering its affinity for the GET1-GET2 receptor, and returning it to the cytosol to initiate a new round of targeting. Cooperates with the HDEL receptor ERD2 to mediate the ATP-dependent retrieval of resident ER proteins that contain a C-terminal H-D-E-L retention signal from the Golgi to the ER. Involved in low-level resistance to the oxyanions arsenite and arsenate, and in heat tolerance. The polypeptide is ATPase GET3 (Meyerozyma guilliermondii (strain ATCC 6260 / CBS 566 / DSM 6381 / JCM 1539 / NBRC 10279 / NRRL Y-324) (Yeast)).